A 164-amino-acid polypeptide reads, in one-letter code: CASP-like protein 1C1 (164 aa).

Over 1–7 (MVKLTKR) the chain is Cytoplasmic. Residues 8-28 (IGGLVLRLAAFGAALAALIVM) form a helical membrane-spanning segment. Residues 29 to 51 (ITSRERASFLAISLEAKYTDMAA) lie on the Extracellular side of the membrane. Residues 52-72 (FKYFVIANAVVSVYSFLVLFL) traverse the membrane as a helical segment. Topologically, residues 73 to 80 (PKESLLWK) are cytoplasmic. The helical transmembrane segment at 81–101 (FVVVLDLVMTMLLTSSLSAAL) threads the bilayer. At 102 to 129 (AVAQVGKKGNANAGWLPICGQVPKFCDQ) the chain is on the extracellular side. The chain crosses the membrane as a helical span at residues 130-150 (ITGALIAGFVALVLYVLLLLY). Residues 151–164 (SLHAVVDPFLLQKS) are Cytoplasmic-facing.

It belongs to the Casparian strip membrane proteins (CASP) family. In terms of assembly, homodimer and heterodimers. In terms of tissue distribution, expressed in the stele of the root.

The protein resides in the cell membrane. In Arabidopsis thaliana (Mouse-ear cress), this protein is CASP-like protein 1C1.